Reading from the N-terminus, the 114-residue chain is Integration host factor subunit alpha (114 aa).

This sequence belongs to the bacterial histone-like protein family. In terms of assembly, heterodimer of an alpha and a beta chain.

Its function is as follows. This protein is one of the two subunits of integration host factor, a specific DNA-binding protein that functions in genetic recombination as well as in transcriptional and translational control. This Afipia carboxidovorans (strain ATCC 49405 / DSM 1227 / KCTC 32145 / OM5) (Oligotropha carboxidovorans) protein is Integration host factor subunit alpha.